Consider the following 229-residue polypeptide: MAKKKAFTPLFYLSFIVFLPWWISFSFKKCLESWITNWWNTGQSEIFLNDIQEKSILEKFIELEEFVFLDEMIKEYSETHPQEFRIGIHKETIQFIKIQNEGHIHTILHFSTNLICFVILSGYSIWGNENLVILNSWSREFLYNLSDTVKVFSILLLTDLCIGFHSPHGWELMIGSIYQDFGFGYNDQILSGLVSTFPVILDTILKYWIFRYLNRVSPSLVVIYHSMND.

3 helical membrane-spanning segments follow: residues 7-27, 114-134, and 189-209; these read FTPL…SFSF, LICF…LVIL, and ILSG…KYWI.

Belongs to the CemA family.

Its subcellular location is the plastid. The protein resides in the chloroplast inner membrane. The enzyme catalyses K(+)(in) + H(+)(out) = K(+)(out) + H(+)(in). In terms of biological role, contributes to K(+)/H(+) antiport activity by supporting proton efflux to control proton extrusion and homeostasis in chloroplasts in a light-dependent manner to modulate photosynthesis. Prevents excessive induction of non-photochemical quenching (NPQ) under continuous-light conditions. Indirectly promotes efficient inorganic carbon uptake into chloroplasts. This chain is Potassium/proton antiporter CemA, found in Ipomoea purpurea (Common morning glory).